The sequence spans 267 residues: MTIPAFGLGTFRLKDDVVIASVKTALELGYRAVDTAQIYDNEAAVGQAIAESGVPRNELYITTKIWIENLSKDKLIPSLKESLKKLRTDYVDLTLIHWPSPGDAVSVEEFMQALLEAKKQGLTREIGISNFTIPLMEKAIAAVGADNIATNQIELSPYLQNRKVVDWAKAHGIHITSYMTLAYGKALKDEVIARIAAKHNATPAQVILAWAMGEGYSVIPSSTRRENLASSLLAQDLHLDAEDKNAIAALDCNDRLVSPEGLAPAWD.

Catalysis depends on Tyr-39, which acts as the Proton donor. A substrate-binding site is contributed by His-97. An NADP(+)-binding site is contributed by 179 to 231 (MTLAYGKALKDEVIARIAAKHNATPAQVILAWAMGEGYSVIPSSTRRENLASS).

The protein belongs to the aldo/keto reductase family. As to quaternary structure, monomer.

It localises to the cytoplasm. It catalyses the reaction hydroxyacetone + NADP(+) = methylglyoxal + NADPH + H(+). In terms of biological role, aldo-keto reductase that significantly contributes to cellular methylglyoxal detoxification by catalyzing the NADPH-dependent conversion of methylglyoxal to acetol. This is Methylglyoxal reductase DkgB from Salmonella typhimurium (strain LT2 / SGSC1412 / ATCC 700720).